The sequence spans 184 residues: NADH-quinone oxidoreductase subunit B (184 aa).

The [4Fe-4S] cluster site is built by Cys63, Cys64, Cys128, and Cys158.

This sequence belongs to the complex I 20 kDa subunit family. NDH-1 is composed of 14 different subunits. Subunits NuoB, C, D, E, F, and G constitute the peripheral sector of the complex. Requires [4Fe-4S] cluster as cofactor.

The protein resides in the cell inner membrane. It carries out the reaction a quinone + NADH + 5 H(+)(in) = a quinol + NAD(+) + 4 H(+)(out). Its function is as follows. NDH-1 shuttles electrons from NADH, via FMN and iron-sulfur (Fe-S) centers, to quinones in the respiratory chain. The immediate electron acceptor for the enzyme in this species is believed to be ubiquinone. Couples the redox reaction to proton translocation (for every two electrons transferred, four hydrogen ions are translocated across the cytoplasmic membrane), and thus conserves the redox energy in a proton gradient. The polypeptide is NADH-quinone oxidoreductase subunit B (Xanthomonas oryzae pv. oryzae (strain MAFF 311018)).